The chain runs to 684 residues: Histone-lysine N-methyltransferase SETMAR (684 aa).

The tract at residues 1-345 (MFAEAAKTTR…RLTLETMKMM (345 aa)) is histone-lysine N-methyltransferase. The Pre-SET domain occupies 73-136 (PGCICVKTPC…HCRNRVVQKG (64 aa)). Positions 75, 77, 82, 87, 89, 118, 122, 124, and 128 each coordinate Zn(2+). One can recognise an SET domain in the interval 139 to 263 (FHFQVFKTHK…PEEELSYDYS (125 aa)). S-adenosyl-L-methionine is bound by residues 149-151 (KGW), Tyr-192, Arg-220, and 223-224 (NH). 4 residues coordinate Zn(2+): Cys-226, Cys-287, Cys-289, and Cys-294. The 17-residue stretch at 283–299 (LRKPCYCGAKSCTAFLP) folds into the Post-SET domain. Residues 346-684 (LDKKQIRAIF…CVDCNGSYFD (339 aa)) form a mariner transposase Hsmar1 region. 2 consecutive DNA-binding regions (H-T-H motif) follow at residues 364-395 (KAAE…KFCK) and 428-448 (TTRE…RHLK). Asp-496 contributes to the Mg(2+) binding site. N6-methyllysine is present on Lys-498. Residue Ser-508 is modified to Phosphoserine; by CHEK1. A Mg(2+)-binding site is contributed by Asp-588.

In the N-terminal section; belongs to the class V-like SAM-binding methyltransferase superfamily. The protein in the C-terminal section; belongs to the mariner transposase family. As to quaternary structure, homodimer. Interacts with PRPF19; required for SETMAR recruitment to damaged DNA sites. Interacts with PCNA. Interacts with TOP2A; stimulates TOP2A topoisomerase activity. May interact with RAD9A and/or RAD9B. Mg(2+) is required as a cofactor. In terms of processing, methylated. Methylation regulates activity in DNA decatenation. Post-translationally, phosphorylated at Ser-508 by CHEK1 and dephosphorylated by protein phosphatase 2A/PP2A. Phosphorylation at Ser-508 is enhanced by DNA damage and promotes recruitment to damaged DNA. It stimulates DNA repair and impairs replication fork restart. Widely expressed, with highest expression in placenta and ovary and lowest expression in skeletal muscle.

It localises to the nucleus. It is found in the chromosome. It carries out the reaction L-lysyl(36)-[histone H3] + 2 S-adenosyl-L-methionine = N(6),N(6)-dimethyl-L-lysyl(36)-[histone H3] + 2 S-adenosyl-L-homocysteine + 2 H(+). Functionally, protein derived from the fusion of a methylase with the transposase of an Hsmar1 transposon that plays a role in DNA double-strand break repair, stalled replication fork restart and DNA integration. DNA-binding protein, it is indirectly recruited to sites of DNA damage through protein-protein interactions. Also has kept a sequence-specific DNA-binding activity recognizing the 19-mer core of the 5'-terminal inverted repeats (TIRs) of the Hsmar1 element and displays a DNA nicking and end joining activity. In parallel, has a histone methyltransferase activity and methylates 'Lys-4' and 'Lys-36' of histone H3. Specifically mediates dimethylation of H3 'Lys-36' at sites of DNA double-strand break and may recruit proteins required for efficient DSB repair through non-homologous end-joining. Also regulates replication fork processing, promoting replication fork restart and regulating DNA decatenation through stimulation of the topoisomerase activity of TOP2A. This Homo sapiens (Human) protein is Histone-lysine N-methyltransferase SETMAR.